The chain runs to 425 residues: Enolase (425 aa).

Gln-163 serves as a coordination point for (2R)-2-phosphoglycerate. Residue Glu-205 is the Proton donor of the active site. Asp-242, Glu-285, and Asp-312 together coordinate Mg(2+). The (2R)-2-phosphoglycerate site is built by Lys-337, Arg-366, Ser-367, and Lys-388. The active-site Proton acceptor is the Lys-337.

The protein belongs to the enolase family. Requires Mg(2+) as cofactor.

It is found in the cytoplasm. Its subcellular location is the secreted. The protein localises to the cell surface. It catalyses the reaction (2R)-2-phosphoglycerate = phosphoenolpyruvate + H2O. It participates in carbohydrate degradation; glycolysis; pyruvate from D-glyceraldehyde 3-phosphate: step 4/5. Its function is as follows. Catalyzes the reversible conversion of 2-phosphoglycerate (2-PG) into phosphoenolpyruvate (PEP). It is essential for the degradation of carbohydrates via glycolysis. This is Enolase from Ruegeria pomeroyi (strain ATCC 700808 / DSM 15171 / DSS-3) (Silicibacter pomeroyi).